We begin with the raw amino-acid sequence, 351 residues long: Ion-translocating oxidoreductase complex subunit D (351 aa).

The next 4 membrane-spanning stretches (helical) occupy residues 18 to 38 (IMLLVILACIPGIIAQTYFFG), 42 to 62 (LIQVALAIMTAVLAEGAVLHL), 87 to 107 (LPPLAPWWMIVLGTAFAIIIA), and 121 to 141 (PAMVGYVVLLISFPVQMTSWL). An FMN phosphoryl threonine modification is found at T185. A run of 5 helical transmembrane segments spans residues 212-232 (LAGIGWQWINLGFLAGGLLLL), 241-261 (IPVSFLLALAGCAAISWMIAP), 264-284 (FAPPMLHLFSGATMLGAFFIA), 298-318 (LIFGALIGILVWLIRVYGGYP), and 320-340 (GVAFAVLLANICVPLIDHYTQ).

This sequence belongs to the NqrB/RnfD family. In terms of assembly, the complex is composed of six subunits: RnfA, RnfB, RnfC, RnfD, RnfE and RnfG. It depends on FMN as a cofactor.

The protein resides in the cell inner membrane. Its function is as follows. Part of a membrane-bound complex that couples electron transfer with translocation of ions across the membrane. The sequence is that of Ion-translocating oxidoreductase complex subunit D from Yersinia enterocolitica serotype O:8 / biotype 1B (strain NCTC 13174 / 8081).